Consider the following 312-residue polypeptide: DNA-directed RNA polymerase subunit alpha (312 aa).

Residues 1–226 form an alpha N-terminal domain (alpha-NTD) region; that stretch reads MIEFEKPIIT…EHLNLFTDLT (226 aa). Residues 243 to 312 are alpha C-terminal domain (alpha-CTD); sequence DEKVLDRTIE…DLGLGLKNDK (70 aa).

It belongs to the RNA polymerase alpha chain family. In terms of assembly, homodimer. The RNAP catalytic core consists of 2 alpha, 1 beta, 1 beta' and 1 omega subunit. When a sigma factor is associated with the core the holoenzyme is formed, which can initiate transcription.

The enzyme catalyses RNA(n) + a ribonucleoside 5'-triphosphate = RNA(n+1) + diphosphate. In terms of biological role, DNA-dependent RNA polymerase catalyzes the transcription of DNA into RNA using the four ribonucleoside triphosphates as substrates. In Streptococcus agalactiae serotype III (strain NEM316), this protein is DNA-directed RNA polymerase subunit alpha.